The following is a 257-amino-acid chain: Imidazole glycerol phosphate synthase subunit HisF (257 aa).

Active-site residues include D11 and D130.

It belongs to the HisA/HisF family. Heterodimer of HisH and HisF.

Its subcellular location is the cytoplasm. The enzyme catalyses 5-[(5-phospho-1-deoxy-D-ribulos-1-ylimino)methylamino]-1-(5-phospho-beta-D-ribosyl)imidazole-4-carboxamide + L-glutamine = D-erythro-1-(imidazol-4-yl)glycerol 3-phosphate + 5-amino-1-(5-phospho-beta-D-ribosyl)imidazole-4-carboxamide + L-glutamate + H(+). Its pathway is amino-acid biosynthesis; L-histidine biosynthesis; L-histidine from 5-phospho-alpha-D-ribose 1-diphosphate: step 5/9. In terms of biological role, IGPS catalyzes the conversion of PRFAR and glutamine to IGP, AICAR and glutamate. The HisF subunit catalyzes the cyclization activity that produces IGP and AICAR from PRFAR using the ammonia provided by the HisH subunit. In Photobacterium profundum (strain SS9), this protein is Imidazole glycerol phosphate synthase subunit HisF.